A 184-amino-acid polypeptide reads, in one-letter code: Protein GrpE (184 aa).

Positions 1–14 (MANEQNEQSQDLSS) are enriched in polar residues. Residues 1–35 (MANEQNEQSQDLSSEQTTQDHEQTQTEGVEQGAEI) form a disordered region.

This sequence belongs to the GrpE family. In terms of assembly, homodimer.

The protein resides in the cytoplasm. Functionally, participates actively in the response to hyperosmotic and heat shock by preventing the aggregation of stress-denatured proteins, in association with DnaK and GrpE. It is the nucleotide exchange factor for DnaK and may function as a thermosensor. Unfolded proteins bind initially to DnaJ; upon interaction with the DnaJ-bound protein, DnaK hydrolyzes its bound ATP, resulting in the formation of a stable complex. GrpE releases ADP from DnaK; ATP binding to DnaK triggers the release of the substrate protein, thus completing the reaction cycle. Several rounds of ATP-dependent interactions between DnaJ, DnaK and GrpE are required for fully efficient folding. This chain is Protein GrpE, found in Acinetobacter baylyi (strain ATCC 33305 / BD413 / ADP1).